The primary structure comprises 315 residues: Ribosomal RNA small subunit methyltransferase H (315 aa).

S-adenosyl-L-methionine-binding positions include 35–37 (GGH), Asp55, Phe80, Asp102, and Gln109.

It belongs to the methyltransferase superfamily. RsmH family.

The protein resides in the cytoplasm. It carries out the reaction cytidine(1402) in 16S rRNA + S-adenosyl-L-methionine = N(4)-methylcytidine(1402) in 16S rRNA + S-adenosyl-L-homocysteine + H(+). In terms of biological role, specifically methylates the N4 position of cytidine in position 1402 (C1402) of 16S rRNA. The polypeptide is Ribosomal RNA small subunit methyltransferase H (Buchnera aphidicola subsp. Baizongia pistaciae (strain Bp)).